Here is a 578-residue protein sequence, read N- to C-terminus: Hemolysin 4 (578 aa).

A disordered region spans residues 289–322 (KDGPKASWRRRPSSASSVTMPTTPRIIGSNARPE). The region spanning 448-539 (RPVNLQLGGF…LSNLSAHQLL (92 aa)) is the Ricin B-type lectin domain.

This sequence belongs to the HlyA hemolysin family.

Its function is as follows. Bacterial hemolysins are exotoxins that attack blood cell membranes and cause cell rupture by mechanisms not clearly defined. This is Hemolysin 4 (ash4) from Aeromonas salmonicida.